A 73-amino-acid chain; its full sequence is YFSYNDKIIKILEAEYLNADHHFTSGTVISDKLEIACGSGILRVKKLQQESKKALSIEEFLRGTNILKDTVLK.

Belongs to the Fmt family.

The enzyme catalyses L-methionyl-tRNA(fMet) + (6R)-10-formyltetrahydrofolate = N-formyl-L-methionyl-tRNA(fMet) + (6S)-5,6,7,8-tetrahydrofolate + H(+). In terms of biological role, attaches a formyl group to the free amino group of methionyl-tRNA(fMet). The formyl group appears to play a dual role in the initiator identity of N-formylmethionyl-tRNA by promoting its recognition by IF2 and preventing the misappropriation of this tRNA by the elongation apparatus. The protein is Methionyl-tRNA formyltransferase (fmt) of Rickettsia rickettsii.